The following is a 277-amino-acid chain: Large ribosomal subunit protein uL2 (277 aa).

Basic residues-rich tracts occupy residues 210 to 219 (RARWAGKRPQ) and 259 to 277 (TRSK…RNKK). The segment at 210 to 277 (RARWAGKRPQ…KFIVRSRNKK (68 aa)) is disordered.

It belongs to the universal ribosomal protein uL2 family. Part of the 50S ribosomal subunit. Forms a bridge to the 30S subunit in the 70S ribosome.

Its function is as follows. One of the primary rRNA binding proteins. Required for association of the 30S and 50S subunits to form the 70S ribosome, for tRNA binding and peptide bond formation. It has been suggested to have peptidyltransferase activity; this is somewhat controversial. Makes several contacts with the 16S rRNA in the 70S ribosome. This is Large ribosomal subunit protein uL2 from Ligilactobacillus salivarius (strain UCC118) (Lactobacillus salivarius).